A 549-amino-acid chain; its full sequence is Cytochrome bc1 complex cytochrome b subunit (549 aa).

Residues 45–65 (FLLGEIALYSFVVLLITGVYL) traverse the membrane as a helical segment. Heme is bound by residues His-114 and His-128. The next 3 membrane-spanning stretches (helical) occupy residues 118-138 (ALMF…TGAF), 146-166 (WVIG…GYSL), and 189-209 (VIGT…TILI). The heme site is built by His-216 and His-231. 5 helical membrane-spanning segments follow: residues 217 to 237 (ILLL…LVWF), 266 to 286 (SGAF…LLQI), 335 to 355 (PVWV…YPFL), 381 to 401 (IGAM…NDII), and 418 to 438 (IGMV…CIGL).

This sequence belongs to the cytochrome b family. The cytochrome bc1 complex is composed of a cytochrome b (QcrB), the Rieske iron-sulfur protein (QcrA) and a diheme cytochrome c (QcrC) subunit. Heme serves as cofactor.

Its subcellular location is the cell membrane. The catalysed reaction is a quinol + 2 Fe(III)-[cytochrome c](out) = a quinone + 2 Fe(II)-[cytochrome c](out) + 2 H(+)(out). Functionally, cytochrome b subunit of the cytochrome bc1 complex, an essential component of the respiratory electron transport chain required for ATP synthesis. The bc1 complex catalyzes the oxidation of ubiquinol and the reduction of cytochrome c in the respiratory chain. The bc1 complex operates through a Q-cycle mechanism that couples electron transfer to generation of the proton gradient that drives ATP synthesis. The cytochrome b subunit contains two ubiquinol reactive sites: the oxidation (QP) site and the reduction (QN) site. This is Cytochrome bc1 complex cytochrome b subunit (qcrB) from Mycobacterium bovis (strain ATCC BAA-935 / AF2122/97).